Reading from the N-terminus, the 1438-residue chain is DNA-directed RNA polymerase subunit beta' (1438 aa).

Zn(2+) is bound by residues Cys-70, Cys-72, Cys-85, and Cys-88. The Mg(2+) site is built by Asp-461, Asp-463, and Asp-465. Residues Cys-821, Cys-895, Cys-902, and Cys-905 each coordinate Zn(2+). Residues 1413–1427 are compositionally biased toward low complexity; the sequence is DAMAAAMGGDSAGGD. Residues 1413 to 1438 are disordered; it reads DAMAAAMGGDSAGGDTKPEAPEASEE.

The protein belongs to the RNA polymerase beta' chain family. The RNAP catalytic core consists of 2 alpha, 1 beta, 1 beta' and 1 omega subunit. When a sigma factor is associated with the core the holoenzyme is formed, which can initiate transcription. It depends on Mg(2+) as a cofactor. Zn(2+) is required as a cofactor.

It catalyses the reaction RNA(n) + a ribonucleoside 5'-triphosphate = RNA(n+1) + diphosphate. Functionally, DNA-dependent RNA polymerase catalyzes the transcription of DNA into RNA using the four ribonucleoside triphosphates as substrates. The polypeptide is DNA-directed RNA polymerase subunit beta' (Erythrobacter litoralis (strain HTCC2594)).